A 554-amino-acid polypeptide reads, in one-letter code: 2-succinyl-5-enolpyruvyl-6-hydroxy-3-cyclohexene-1-carboxylate synthase (554 aa).

The protein belongs to the TPP enzyme family. MenD subfamily. As to quaternary structure, homodimer. The cofactor is Mg(2+). Mn(2+) is required as a cofactor. Thiamine diphosphate serves as cofactor.

The enzyme catalyses isochorismate + 2-oxoglutarate + H(+) = 5-enolpyruvoyl-6-hydroxy-2-succinyl-cyclohex-3-ene-1-carboxylate + CO2. Its pathway is quinol/quinone metabolism; 1,4-dihydroxy-2-naphthoate biosynthesis; 1,4-dihydroxy-2-naphthoate from chorismate: step 2/7. The protein operates within quinol/quinone metabolism; menaquinone biosynthesis. Catalyzes the thiamine diphosphate-dependent decarboxylation of 2-oxoglutarate and the subsequent addition of the resulting succinic semialdehyde-thiamine pyrophosphate anion to isochorismate to yield 2-succinyl-5-enolpyruvyl-6-hydroxy-3-cyclohexene-1-carboxylate (SEPHCHC). The protein is 2-succinyl-5-enolpyruvyl-6-hydroxy-3-cyclohexene-1-carboxylate synthase of Flavobacterium johnsoniae (strain ATCC 17061 / DSM 2064 / JCM 8514 / BCRC 14874 / CCUG 350202 / NBRC 14942 / NCIMB 11054 / UW101) (Cytophaga johnsonae).